Reading from the N-terminus, the 122-residue chain is Seripauperin-5 (122 aa).

Residues 7 to 24 (IAAGVAAIAAGASAAATT) form a helical membrane-spanning segment.

Belongs to the SRP1/TIP1 family. Seripauperin subfamily.

The protein resides in the membrane. The chain is Seripauperin-5 (PAU5) from Saccharomyces cerevisiae (strain ATCC 204508 / S288c) (Baker's yeast).